A 472-amino-acid chain; its full sequence is MATKCGNCGPGYSTPLEAMKGPREEIVYLPCIYRNTGTEAPDYLATVDVDPKSPQYCQVIHRLPMPNLKDELHHSGWNTCSSCFGDSTKSRTKLVLPSLISSRIYVVDVGSEPRALKLHKVIEPKDIHAKCELAFLHTSHCLASGEVMISSLGDVKGNGKGGFVLLDAETFEVKGTWERRGGAAPLGYDFWYQPRHNVMISTEWAAPNVLRDGFNPADVEAGLYGSHLYVWDWQRHEIVQTLSLKDGLIPLEIRFLHNPDAAQGFVGCALSSTIQRFYKNEGGTWSVEKVIQVPPKKVKGWLLPEMPGLITDILLSLDDRFLYFSNWLHGDLRQYDISDPQRPRLTGQLFVGGSIVKGGPVQVLEDQELKSQPEPLVVKGKRVAGGPQMIQLSLDGKRLYVTTSLYSAWDKQFYPDLIREGSVMLQVDVDTVKGGLKLNPNFLVDFGKEPLGPALAHELRYPGGDCSSDIWI.

The residue at position 2 (Ala2) is an N-acetylalanine. Ser111, Ser371, and Ser467 each carry phosphoserine.

It belongs to the selenium-binding protein family. As to quaternary structure, interacts with USP33. The N-terminus is blocked.

The protein localises to the nucleus. It localises to the cytoplasm. It is found in the cytosol. The protein resides in the membrane. The catalysed reaction is methanethiol + O2 + H2O = hydrogen sulfide + formaldehyde + H2O2 + H(+). It functions in the pathway organosulfur degradation. Catalyzes the oxidation of methanethiol, an organosulfur compound known to be produced in substantial amounts by gut bacteria. Selenium-binding protein which may be involved in the sensing of reactive xenobiotics in the cytoplasm. May be involved in intra-Golgi protein transport. In Pongo abelii (Sumatran orangutan), this protein is Methanethiol oxidase (SELENBP1).